A 293-amino-acid polypeptide reads, in one-letter code: tRNA-cytidine(32) 2-sulfurtransferase (293 aa).

A PP-loop motif motif is present at residues 71–76 (SGGKDS). 3 residues coordinate [4Fe-4S] cluster: cysteine 146, cysteine 149, and cysteine 237.

This sequence belongs to the TtcA family. Homodimer. Mg(2+) is required as a cofactor. [4Fe-4S] cluster serves as cofactor.

It localises to the cytoplasm. It catalyses the reaction cytidine(32) in tRNA + S-sulfanyl-L-cysteinyl-[cysteine desulfurase] + AH2 + ATP = 2-thiocytidine(32) in tRNA + L-cysteinyl-[cysteine desulfurase] + A + AMP + diphosphate + H(+). Its pathway is tRNA modification. Catalyzes the ATP-dependent 2-thiolation of cytidine in position 32 of tRNA, to form 2-thiocytidine (s(2)C32). The sulfur atoms are provided by the cysteine/cysteine desulfurase (IscS) system. The polypeptide is tRNA-cytidine(32) 2-sulfurtransferase (Sinorhizobium medicae (strain WSM419) (Ensifer medicae)).